Here is a 245-residue protein sequence, read N- to C-terminus: 4-hydroxy-tetrahydrodipicolinate reductase (245 aa).

NAD(+)-binding positions include 7–12, 75–77, and 102–105; these read GAKGKV, GTT, and APNF. The active-site Proton donor/acceptor is the H132. Residue H133 coordinates (S)-2,3,4,5-tetrahydrodipicolinate. Catalysis depends on K136, which acts as the Proton donor. 142-143 contributes to the (S)-2,3,4,5-tetrahydrodipicolinate binding site; that stretch reads GT.

This sequence belongs to the DapB family.

It is found in the cytoplasm. The enzyme catalyses (S)-2,3,4,5-tetrahydrodipicolinate + NAD(+) + H2O = (2S,4S)-4-hydroxy-2,3,4,5-tetrahydrodipicolinate + NADH + H(+). The catalysed reaction is (S)-2,3,4,5-tetrahydrodipicolinate + NADP(+) + H2O = (2S,4S)-4-hydroxy-2,3,4,5-tetrahydrodipicolinate + NADPH + H(+). It participates in amino-acid biosynthesis; L-lysine biosynthesis via DAP pathway; (S)-tetrahydrodipicolinate from L-aspartate: step 4/4. Catalyzes the conversion of 4-hydroxy-tetrahydrodipicolinate (HTPA) to tetrahydrodipicolinate. In Mycobacterium bovis (strain BCG / Pasteur 1173P2), this protein is 4-hydroxy-tetrahydrodipicolinate reductase.